A 362-amino-acid chain; its full sequence is Caspase activity and apoptosis inhibitor 1 (362 aa).

Over residues 1–14 (MTGKKSSREKRRKR) the composition is skewed to basic residues. 2 disordered regions span residues 1–44 (MTGK…SGCG) and 65–101 (TGGG…GSLQ). Low complexity predominate over residues 19 to 32 (AAAALAAPDLVPAV). Composition is skewed to gly residues over residues 33–44 (GGSGSGSTSGCG) and 65–74 (TGGGSGGSCW). A Phosphoserine modification is found at S89. T90 is subject to Phosphothreonine. A Glycyl lysine isopeptide (Lys-Gly) (interchain with G-Cter in SUMO2) cross-link involves residue K105. A phosphoserine mark is found at S121 and S204. Disordered stretches follow at residues 226-251 (SCVD…GKGE), 269-291 (GPCN…EAGQ), and 309-332 (LAES…DVQP). Positions 235-251 (RENKQPEGLELKQGKGE) are enriched in basic and acidic residues. The span at 273–282 (EEAAAPEVPE) shows a compositional bias: low complexity. Residues 282–312 (ENTVQSEAGQIDDLEKDIEKSVNEILGLAES) adopt a coiled-coil conformation. A Phosphoserine modification is found at S313.

In terms of biological role, anti-apoptotic protein that modulates a caspase-10 dependent mitochondrial caspase-3/9 feedback amplification loop. This chain is Caspase activity and apoptosis inhibitor 1 (CAAP1), found in Bos taurus (Bovine).